A 370-amino-acid chain; its full sequence is MLKTEELQINIGPQHPSTHGVFRMLVTVDGETLVDLKPVFGYLHRNHEQLGEVNTYLQNMPFTDRLDYFNSMVNNHAYARAVETLAGVEVPERAQYIRVIMDELSRILNHATAMGFMLGDMGAWQTALLWGMREREKILDMFEYVSGARMMCNYCRFGGVVRDIDDWFITELKKLMQGLPHYFDDFEGLLLNSEILLARARNIGVLPKELALAYSVTGPVLRGSGVAYDIRKAEPYAVYDRFKFKVPVGTVGDVYDRFLVRIAEMRESYKILEQAIEQLPDATGGFINPKVKQQSLKAPAGEAYARVESPKGELGFYLVSDGSGSAYRYKVRAPSFINLSSLADMCKGYSIADVVVILGSIDIVMGEVDR.

Belongs to the complex I 49 kDa subunit family. In terms of assembly, NDH-1 is composed of 14 different subunits. Subunits NuoB, C, D, E, F, and G constitute the peripheral sector of the complex.

It localises to the cell membrane. It catalyses the reaction a quinone + NADH + 5 H(+)(in) = a quinol + NAD(+) + 4 H(+)(out). In terms of biological role, NDH-1 shuttles electrons from NADH, via FMN and iron-sulfur (Fe-S) centers, to quinones in the respiratory chain. The immediate electron acceptor for the enzyme in this species is believed to be ubiquinone. Couples the redox reaction to proton translocation (for every two electrons transferred, four hydrogen ions are translocated across the cytoplasmic membrane), and thus conserves the redox energy in a proton gradient. This Herpetosiphon aurantiacus (strain ATCC 23779 / DSM 785 / 114-95) protein is NADH-quinone oxidoreductase subunit D 2.